The following is a 1172-amino-acid chain: DNA-directed RNA polymerase subunit beta (1172 aa).

It belongs to the RNA polymerase beta chain family. As to quaternary structure, the RNAP catalytic core consists of 2 alpha, 1 beta, 1 beta' and 1 omega subunit. When a sigma factor is associated with the core the holoenzyme is formed, which can initiate transcription.

The catalysed reaction is RNA(n) + a ribonucleoside 5'-triphosphate = RNA(n+1) + diphosphate. In terms of biological role, DNA-dependent RNA polymerase catalyzes the transcription of DNA into RNA using the four ribonucleoside triphosphates as substrates. This Pseudothermotoga lettingae (strain ATCC BAA-301 / DSM 14385 / NBRC 107922 / TMO) (Thermotoga lettingae) protein is DNA-directed RNA polymerase subunit beta.